The following is a 184-amino-acid chain: ATP synthase subunit delta (184 aa).

Belongs to the ATPase delta chain family. As to quaternary structure, F-type ATPases have 2 components, F(1) - the catalytic core - and F(0) - the membrane proton channel. F(1) has five subunits: alpha(3), beta(3), gamma(1), delta(1), epsilon(1). F(0) has three main subunits: a(1), b(2) and c(10-14). The alpha and beta chains form an alternating ring which encloses part of the gamma chain. F(1) is attached to F(0) by a central stalk formed by the gamma and epsilon chains, while a peripheral stalk is formed by the delta and b chains.

It is found in the cell inner membrane. Functionally, f(1)F(0) ATP synthase produces ATP from ADP in the presence of a proton or sodium gradient. F-type ATPases consist of two structural domains, F(1) containing the extramembraneous catalytic core and F(0) containing the membrane proton channel, linked together by a central stalk and a peripheral stalk. During catalysis, ATP synthesis in the catalytic domain of F(1) is coupled via a rotary mechanism of the central stalk subunits to proton translocation. Its function is as follows. This protein is part of the stalk that links CF(0) to CF(1). It either transmits conformational changes from CF(0) to CF(1) or is implicated in proton conduction. In Caulobacter sp. (strain K31), this protein is ATP synthase subunit delta.